The chain runs to 264 residues: SPARC (264 aa).

Residues 1 to 16 form the signal peptide; that stretch reads MRYALAACLLLLAASS. The Follistatin-like domain maps to 52 to 74; the sequence is PCEDHQCGWGKECVVGKKGEPTC. Cystine bridges form between cysteine 53/cysteine 64, cysteine 58/cysteine 74, cysteine 76/cysteine 110, cysteine 80/cysteine 103, cysteine 92/cysteine 135, cysteine 141/cysteine 228, and cysteine 236/cysteine 252. The region spanning 68–137 is the Kazal-like domain; the sequence is KKGEPTCECI…HLEYLGECKK (70 aa). Asparagine 96 is a glycosylation site (N-linked (GlcNAc...) asparagine). In terms of domain architecture, EF-hand spans 224-259; the sequence is PMESCIKPFLEGCDANNDGNISIKEWGKCLGLKEGE. Ca(2+) is bound by residues aspartate 237, asparagine 239, aspartate 241, asparagine 243, and glutamate 248. N-linked (GlcNAc...) asparagine glycosylation is present at asparagine 243.

The protein belongs to the SPARC family. Expressed by body wall and sex muscle cells. Probable association with basement membranes.

The protein resides in the secreted. It localises to the extracellular space. Its subcellular location is the extracellular matrix. It is found in the basement membrane. Functionally, has a high affinity for collagen. Affects nematode body morphology and mobility. Essential for C.elegans development and muscle function. The cysteine-rich region could have protease inhibitory activity or may provide the framework for a protein binding module. Probable role in skeletal morphogenesis. This chain is SPARC (ost-1), found in Caenorhabditis elegans.